The chain runs to 587 residues: Kelch-like protein 3 (587 aa).

Residues 1–22 (MDGESIKPSSQPLIQTGDDEKN) form a disordered region. Serine 10 is modified (phosphoserine). The BTB domain maps to 50–117 (CDVMIVAEDV…IYTAEIEVTE (68 aa)). In terms of domain architecture, BACK spans 152–254 (CLGIRAFADV…PRDYLVQTVE (103 aa)). The residue at position 295 (threonine 295) is a Phosphothreonine. Kelch repeat units follow at residues 302–347 (VMIV…FMAG), 348–394 (HVYA…VLND), 396–441 (LYAV…VVEG), 442–490 (KLYA…VLSG), 491–537 (QLYA…AVNG), and 539–585 (LYVV…VIHK). Position 375 is a phosphothreonine (threonine 375). 2 positions are modified to phosphoserine: serine 376 and serine 433.

The protein belongs to the KLHL3 family. In terms of assembly, homodimer. Component of the BCR(KLHL3) E3 ubiquitin ligase complex, at least composed of CUL3 and KLHL3 and RBX1. Interacts with CLDN8. Phosphorylation at Ser-433 by PKA or PKC decreases the interaction with WNK1 and WNK4, leading to inhibit their degradation by the BCR(KLHL3) complex. Phosphorylated at Ser-433 by PKC in response to angiotensin II signaling, decreasing ability to promote degradation of WNK1 and WNK4, leading to activation of Na-Cl cotransporter SLC12A3/NCC. Phosphorylation at Ser-433 is increased by insulin. Dephosphorylated at Ser-433 by calcineurin PPP3CA, promoting degradation of WNK1 and WNK4.

The protein resides in the cytoplasm. It is found in the cytoskeleton. It localises to the cytosol. The protein operates within protein modification; protein ubiquitination. Its function is as follows. Substrate-specific adapter of a BCR (BTB-CUL3-RBX1) E3 ubiquitin ligase complex that acts as a regulator of ion transport in the distal nephron. The BCR(KLHL3) complex acts by mediating ubiquitination and degradation of WNK1 and WNK4, two activators of Na-Cl cotransporter SLC12A3/NCC in distal convoluted tubule cells of kidney, thereby regulating NaCl reabsorption. The BCR(KLHL3) complex also mediates ubiquitination and degradation of WNK3. The BCR(KLHL3) complex also mediates ubiquitination of CLDN8, a tight-junction protein required for paracellular chloride transport in the kidney, leading to its degradation. The chain is Kelch-like protein 3 (KLHL3) from Bos taurus (Bovine).